We begin with the raw amino-acid sequence, 211 residues long: Ras-related protein Rab-38 (211 aa).

10 residues coordinate GTP: glycine 19, valine 20, glycine 21, lysine 22, threonine 23, serine 24, serine 35, serine 36, tyrosine 38, and threonine 41. Threonine 23 serves as a coordination point for Mg(2+). Positions 32 to 46 (QNFSSHYRATIGVDF) match the Switch 1 motif. Threonine 41 and aspartate 65 together coordinate Mg(2+). Glycine 68, lysine 128, aspartate 130, alanine 160, and lysine 161 together coordinate GTP. The short motif at 68 to 81 (GQERFGNMTRVYYR) is the Switch 2 element. Residue cysteine 205 is the site of S-palmitoyl cysteine attachment. Cysteine 208 carries the S-geranylgeranyl cysteine lipid modification.

The protein belongs to the small GTPase superfamily. Rab family. As to quaternary structure, interacts with ANKRD27. Mg(2+) is required as a cofactor. Post-translationally, although at least one in vitro system can process and methylate the prenylated C-terminal, in an in vitro system that normally express Rab-38 and in vivo the prenylated C-terminal is not proteolytically processed and not methylated. In terms of tissue distribution, expressed in melanocytes.

It localises to the cell membrane. Its subcellular location is the melanosome. It is found in the cytoplasmic vesicle. The protein resides in the phagosome. The protein localises to the phagosome membrane. It localises to the melanosome membrane. It carries out the reaction GTP + H2O = GDP + phosphate + H(+). With respect to regulation, regulated by guanine nucleotide exchange factors (GEFs) including the BLOC-3 complex composed of HPS1 and HPS4 which promote the exchange of bound GDP for free GTP. Regulated by GTPase activating proteins (GAPs) including SGSM2 which increase the GTP hydrolysis activity. Inhibited by GDP dissociation inhibitors (GDIs). In terms of biological role, the small GTPases Rab are key regulators of intracellular membrane trafficking, from the formation of transport vesicles to their fusion with membranes. Rabs cycle between an inactive GDP-bound form and an active GTP-bound form that is able to recruit to membranes different sets of downstream effectors directly responsible for vesicle formation, movement, tethering and fusion. RAB38 may be involved in melanosomal transport and docking. Involved in the proper sorting of TYRP1. Involved in peripheral melanosomal distribution of TYRP1 in melanocytes; the function, which probably is implicating vesicle-trafficking, includes cooperation with ANKRD27 and VAMP7. Plays a role in the maturation of phagosomes that engulf pathogens, such as S.aureus and M.tuberculosis. Plays an important role in the control of melanin production and melanosome biogenesis. In concert with RAB32, regulates the proper trafficking of melanogenic enzymes TYR, TYRP1 and DCT/TYRP2 to melanosomes in melanocytes. The sequence is that of Ras-related protein Rab-38 from Homo sapiens (Human).